Consider the following 569-residue polypeptide: Dihydroxy-acid dehydratase (569 aa).

Cys61 provides a ligand contact to [2Fe-2S] cluster. Residue Asp93 coordinates Mg(2+). Residue Cys134 participates in [2Fe-2S] cluster binding. Mg(2+) contacts are provided by Asp135 and Lys136. Lys136 carries the post-translational modification N6-carboxylysine. Cys211 contacts [2Fe-2S] cluster. A Mg(2+)-binding site is contributed by Glu462. The active-site Proton acceptor is Ser488.

It belongs to the IlvD/Edd family. Homodimer. [2Fe-2S] cluster serves as cofactor. Requires Mg(2+) as cofactor.

It carries out the reaction (2R)-2,3-dihydroxy-3-methylbutanoate = 3-methyl-2-oxobutanoate + H2O. It catalyses the reaction (2R,3R)-2,3-dihydroxy-3-methylpentanoate = (S)-3-methyl-2-oxopentanoate + H2O. Its pathway is amino-acid biosynthesis; L-isoleucine biosynthesis; L-isoleucine from 2-oxobutanoate: step 3/4. It functions in the pathway amino-acid biosynthesis; L-valine biosynthesis; L-valine from pyruvate: step 3/4. Its function is as follows. Functions in the biosynthesis of branched-chain amino acids. Catalyzes the dehydration of (2R,3R)-2,3-dihydroxy-3-methylpentanoate (2,3-dihydroxy-3-methylvalerate) into 2-oxo-3-methylpentanoate (2-oxo-3-methylvalerate) and of (2R)-2,3-dihydroxy-3-methylbutanoate (2,3-dihydroxyisovalerate) into 2-oxo-3-methylbutanoate (2-oxoisovalerate), the penultimate precursor to L-isoleucine and L-valine, respectively. This Tropheryma whipplei (strain Twist) (Whipple's bacillus) protein is Dihydroxy-acid dehydratase.